Reading from the N-terminus, the 378-residue chain is 1-acyl-sn-glycerol-3-phosphate acyltransferase delta (378 aa).

Residues 11–31 (FLCHLVFCYVFIASGLIVNAI) form a helical membrane-spanning segment. The HXXXXD motif signature appears at 96–101 (HKFEID). A run of 3 helical transmembrane segments spans residues 125–145 (ELAY…IFCT), 311–331 (WLFW…SMVS), and 338–358 (LASL…MIGV).

It belongs to the 1-acyl-sn-glycerol-3-phosphate acyltransferase family. Expressed at a high levels in the brain, at intermediate or low levels in skeletal muscles, gut, kidney, spleen and lung. Barely detectable in heart and liver.

It is found in the endoplasmic reticulum membrane. It carries out the reaction a 1-acyl-sn-glycero-3-phosphate + an acyl-CoA = a 1,2-diacyl-sn-glycero-3-phosphate + CoA. The catalysed reaction is (4Z,7Z,10Z,13Z,16Z,19Z)-docosahexaenoyl-CoA + 1-hexadecanoyl-sn-glycero-3-phosphate = 1-hexadecanoyl-2-(4Z,7Z,10Z,13Z,16Z,19Z-docosahexaenoyl)-sn-glycero-3-phosphate + CoA. It catalyses the reaction 1-octadecanoyl-sn-glycero-3-phosphate + (9Z,12Z)-octadecadienoyl-CoA = 1-octadecanoyl-2-(9Z,12Z-octadecadienoyl)-sn-glycero-3-phosphate + CoA. The enzyme catalyses 1-octadecanoyl-sn-glycero-3-phosphate + (4Z,7Z,10Z,13Z,16Z,19Z)-docosahexaenoyl-CoA = 1-octadecanoyl-2-(4Z,7Z,10Z,13Z,16Z,19Z-docosahexaenoyl)-sn-glycero-3-phosphate + CoA. It carries out the reaction (4Z,7Z,10Z,13Z,16Z,19Z)-docosahexaenoyl-CoA + 1-(9Z-octadecenoyl)-sn-glycero-3-phosphate = 1-(9Z-octadecenoyl)-2-(4Z,7Z,10Z,13Z,16Z,19Z-docosahexaenoyl)-sn-glycero-3-phosphate + CoA. It participates in phospholipid metabolism; CDP-diacylglycerol biosynthesis; CDP-diacylglycerol from sn-glycerol 3-phosphate: step 2/3. Converts 1-acyl-sn-glycerol-3-phosphate (lysophosphatidic acid or LPA) into 1,2-diacyl-sn-glycerol-3-phosphate (phosphatidic acid or PA) by incorporating an acyl moiety at the sn-2 position of the glycerol backbone. Exhibits high acyl-CoA specificity for polyunsaturated fatty acyl-CoA, especially docosahexaenoyl-CoA (22:6-CoA, DHA-CoA). The chain is 1-acyl-sn-glycerol-3-phosphate acyltransferase delta (Agpat4) from Mus musculus (Mouse).